Consider the following 228-residue polypeptide: Probable calcium-binding protein CML48 (228 aa).

EF-hand domains lie at 52–87 and 121–156; these read ETHP…SGYD and NCLA…LGCV. Asp-65, Asn-67, Ser-69, and Glu-76 together coordinate Ca(2+).

In terms of biological role, potential calcium sensor. The polypeptide is Probable calcium-binding protein CML48 (CML48) (Arabidopsis thaliana (Mouse-ear cress)).